Consider the following 409-residue polypeptide: Elongation factor Tu (409 aa).

The tr-type G domain maps to 10–214 (KPHVNIGTIG…AVDAYIPTPE (205 aa)). Positions 19 to 26 (GHVDHGKT) are G1. GTP is bound at residue 19 to 26 (GHVDHGKT). T26 is a Mg(2+) binding site. The interval 60-64 (GITIN) is G2. The segment at 81–84 (DCPG) is G3. Residues 81–85 (DCPGH) and 136–139 (NKKD) contribute to the GTP site. Positions 136-139 (NKKD) are G4. The segment at 174-176 (SAL) is G5.

It belongs to the TRAFAC class translation factor GTPase superfamily. Classic translation factor GTPase family. EF-Tu/EF-1A subfamily. In terms of assembly, monomer.

Its subcellular location is the cytoplasm. It catalyses the reaction GTP + H2O = GDP + phosphate + H(+). GTP hydrolase that promotes the GTP-dependent binding of aminoacyl-tRNA to the A-site of ribosomes during protein biosynthesis. This is Elongation factor Tu from Gloeobacter violaceus (strain ATCC 29082 / PCC 7421).